The chain runs to 24 residues: Superoxide dismutase [Cu-Zn], chloroplastic (24 aa).

It belongs to the Cu-Zn superoxide dismutase family. As to quaternary structure, homodimer. It depends on Cu cation as a cofactor. Zn(2+) serves as cofactor.

The protein resides in the plastid. The protein localises to the chloroplast. It catalyses the reaction 2 superoxide + 2 H(+) = H2O2 + O2. Destroys radicals which are normally produced within the cells and which are toxic to biological systems. In Picea abies (Norway spruce), this protein is Superoxide dismutase [Cu-Zn], chloroplastic.